The sequence spans 205 residues: Glycerol-3-phosphate acyltransferase (205 aa).

Transmembrane regions (helical) follow at residues 4–24, 80–100, 112–132, and 138–158; these read IAPGMILLAYLCGSISSAILV, PFWLGLIAIAACLGHIWPIFF, FGAIAPIGWDLTGVMAGTWLL, and GYSSLGAIVSALVAPFYVWWF.

The protein belongs to the PlsY family. In terms of assembly, probably interacts with PlsX.

The protein localises to the cell inner membrane. The catalysed reaction is an acyl phosphate + sn-glycerol 3-phosphate = a 1-acyl-sn-glycero-3-phosphate + phosphate. It participates in lipid metabolism; phospholipid metabolism. In terms of biological role, catalyzes the transfer of an acyl group from acyl-phosphate (acyl-PO(4)) to glycerol-3-phosphate (G3P) to form lysophosphatidic acid (LPA). This enzyme utilizes acyl-phosphate as fatty acyl donor, but not acyl-CoA or acyl-ACP. This chain is Glycerol-3-phosphate acyltransferase, found in Cronobacter sakazakii (strain ATCC BAA-894) (Enterobacter sakazakii).